We begin with the raw amino-acid sequence, 594 residues long: Lysine--tRNA ligase cla4 (594 aa).

Residues 1 to 62 (MADPGAVKET…KETSSEQDEA (62 aa)) are disordered. Basic and acidic residues predominate over residues 18 to 42 (TGEKVSKTELKKRLKSRAKEAEKQK).

Belongs to the class-II aminoacyl-tRNA synthetase family. Homodimer.

The catalysed reaction is tRNA(Lys) + L-lysine + ATP = L-lysyl-tRNA(Lys) + AMP + diphosphate. Involved in self-resistance to cladosporin since this product is an inhibitor of lysyl-tRNA synthetase. Cla4 may not be inhibited by cladosporin, thereby imparting cladosporin resistance. When cladosporin biosynthesis is switched on, transcription of cla4 will then be necessary for continued protein synthesis in C.cladosporioides. The chain is Lysine--tRNA ligase cla4 from Cladosporium cladosporioides.